A 463-amino-acid polypeptide reads, in one-letter code: Nitrogenase vanadium-iron protein beta chain (463 aa).

Residues Cys-20, Cys-45, Cys-104, and Ser-142 each coordinate [8Fe-7S] cluster.

It belongs to the NifD/NifK/NifE/NifN family. In terms of assembly, hexamer of two alpha, two beta, and two delta chains. It depends on [8Fe-7S] cluster as a cofactor.

The enzyme catalyses N2 + 8 reduced [2Fe-2S]-[ferredoxin] + 16 ATP + 16 H2O = H2 + 8 oxidized [2Fe-2S]-[ferredoxin] + 2 NH4(+) + 16 ADP + 16 phosphate + 6 H(+). This vanadium-iron protein is part of the nitrogenase complex that catalyzes the key enzymatic reactions in nitrogen fixation. The protein is Nitrogenase vanadium-iron protein beta chain (vnfK) of Trichormus variabilis (strain ATCC 29413 / PCC 7937) (Anabaena variabilis).